The following is a 446-amino-acid chain: tRNA modification GTPase MnmE (446 aa).

3 residues coordinate (6S)-5-formyl-5,6,7,8-tetrahydrofolate: R22, E80, and K119. The region spanning G215–G370 is the TrmE-type G domain. Position 225 (N225) interacts with K(+). GTP is bound by residues N225–T230, T244–T250, and D269–G272. S229 is a binding site for Mg(2+). T244, I246, and T249 together coordinate K(+). T250 is a binding site for Mg(2+). Residue K446 participates in (6S)-5-formyl-5,6,7,8-tetrahydrofolate binding.

Belongs to the TRAFAC class TrmE-Era-EngA-EngB-Septin-like GTPase superfamily. TrmE GTPase family. As to quaternary structure, homodimer. Heterotetramer of two MnmE and two MnmG subunits. K(+) serves as cofactor.

Its subcellular location is the cytoplasm. Its function is as follows. Exhibits a very high intrinsic GTPase hydrolysis rate. Involved in the addition of a carboxymethylaminomethyl (cmnm) group at the wobble position (U34) of certain tRNAs, forming tRNA-cmnm(5)s(2)U34. This is tRNA modification GTPase MnmE from Legionella pneumophila (strain Paris).